A 137-amino-acid polypeptide reads, in one-letter code: Small ribosomal subunit protein uS9 (137 aa).

The interval 114-137 is disordered; sequence DSRMKERKKPGLRGARRGVQFSKR. The span at 118–137 shows a compositional bias: basic residues; that stretch reads KERKKPGLRGARRGVQFSKR.

Belongs to the universal ribosomal protein uS9 family.

The chain is Small ribosomal subunit protein uS9 from Rhodopirellula baltica (strain DSM 10527 / NCIMB 13988 / SH1).